We begin with the raw amino-acid sequence, 484 residues long: Pyruvate kinase (484 aa).

R33 is a binding site for substrate. 4 residues coordinate K(+): N35, S37, D67, and T68. 35–38 (NFSH) contributes to the ATP binding site. Residues R74 and K155 each coordinate ATP. E221 provides a ligand contact to Mg(2+). The substrate site is built by G244, D245, and T277. Residue D245 participates in Mg(2+) binding.

This sequence belongs to the pyruvate kinase family. As to quaternary structure, homotetramer. Mg(2+) is required as a cofactor. Requires K(+) as cofactor.

It carries out the reaction pyruvate + ATP = phosphoenolpyruvate + ADP + H(+). It participates in carbohydrate degradation; glycolysis; pyruvate from D-glyceraldehyde 3-phosphate: step 5/5. The protein is Pyruvate kinase (pyk) of Chlamydia pneumoniae (Chlamydophila pneumoniae).